Consider the following 177-residue polypeptide: Ribulose bisphosphate carboxylase small subunit, chloroplastic 4 (177 aa).

A chloroplast-targeting transit peptide spans 1–56 (MASSMMASTAAAVARAGPAQTNMVPFNACRSSVPFPATRKANNDLSTLPSNGGRVS).

This sequence belongs to the RuBisCO small chain family. In terms of assembly, heterohexadecamer of 8 large and 8 small subunits.

It localises to the plastid. The protein localises to the chloroplast. RuBisCO catalyzes two reactions: the carboxylation of D-ribulose 1,5-bisphosphate, the primary event in carbon dioxide fixation, as well as the oxidative fragmentation of the pentose substrate. Both reactions occur simultaneously and in competition at the same active site. Although the small subunit is not catalytic it is essential for maximal activity. The chain is Ribulose bisphosphate carboxylase small subunit, chloroplastic 4 from Lemna gibba (Swollen duckweed).